The chain runs to 566 residues: Good for full DBP5 activity protein 2 (566 aa).

Over residues 1–16 the composition is skewed to polar residues; it reads MQVQKMVRDNSNNGSD. Residues 1 to 41 are disordered; sequence MQVQKMVRDNSNNGSDKSVHWERRNNNGAGPRYRSRSGNTG.

High-copy suppressor of DBP5 mutation. In Saccharomyces cerevisiae (strain ATCC 204508 / S288c) (Baker's yeast), this protein is Good for full DBP5 activity protein 2 (GFD2).